Reading from the N-terminus, the 173-residue chain is NADH-ubiquinone oxidoreductase chain 6 (173 aa).

The next 5 helical transmembrane spans lie at 1–21, 27–47, 48–68, 91–111, and 139–159; these read MTYF…AVAS, YGVV…LSLG, VSFV…VVFV, GVSF…IGCL, and CGVG…FVVL.

It belongs to the complex I subunit 6 family.

The protein resides in the mitochondrion membrane. The catalysed reaction is a ubiquinone + NADH + 5 H(+)(in) = a ubiquinol + NAD(+) + 4 H(+)(out). In terms of biological role, core subunit of the mitochondrial membrane respiratory chain NADH dehydrogenase (Complex I) that is believed to belong to the minimal assembly required for catalysis. Complex I functions in the transfer of electrons from NADH to the respiratory chain. The immediate electron acceptor for the enzyme is believed to be ubiquinone. This Fratercula cirrhata (Tufted puffin) protein is NADH-ubiquinone oxidoreductase chain 6 (MT-ND6).